A 212-amino-acid chain; its full sequence is Putative 3-methyladenine DNA glycosylase (212 aa).

This sequence belongs to the DNA glycosylase MPG family.

The sequence is that of Putative 3-methyladenine DNA glycosylase from Psychrobacter cryohalolentis (strain ATCC BAA-1226 / DSM 17306 / VKM B-2378 / K5).